The chain runs to 704 residues: Polyribonucleotide nucleotidyltransferase (704 aa).

Positions 485 and 491 each coordinate Mg(2+). The region spanning 552–611 (PRIYTMKIDPKKIKDVIGKGGATIRALTEETGTSIDIDDDGTVKIAAVDGNAVKTVMARI) is the KH domain. An S1 motif domain is found at 621 to 689 (GAVYTGKVTR…RQGRIRLTMR (69 aa)).

This sequence belongs to the polyribonucleotide nucleotidyltransferase family. Component of the RNA degradosome, which is a multiprotein complex involved in RNA processing and mRNA degradation. Mg(2+) serves as cofactor.

The protein resides in the cytoplasm. It catalyses the reaction RNA(n+1) + phosphate = RNA(n) + a ribonucleoside 5'-diphosphate. Its function is as follows. Involved in mRNA degradation. Catalyzes the phosphorolysis of single-stranded polyribonucleotides processively in the 3'- to 5'-direction. The protein is Polyribonucleotide nucleotidyltransferase of Mannheimia succiniciproducens (strain KCTC 0769BP / MBEL55E).